Here is a 688-residue protein sequence, read N- to C-terminus: Beta-galactosidase BglY (688 aa).

Arg-118 provides a ligand contact to substrate. Residue Cys-122 participates in Zn(2+) binding. Asn-156 contacts substrate. Glu-157 serves as the catalytic Proton donor. Zn(2+)-binding residues include Cys-162, Cys-164, and Cys-167. Glu-313 acts as the Nucleophile in catalysis. Substrate is bound by residues Trp-321 and 361 to 364; that span reads EKFH.

The protein belongs to the glycosyl hydrolase 42 family.

The catalysed reaction is Hydrolysis of terminal non-reducing beta-D-galactose residues in beta-D-galactosides.. Ca(2+), Mg(2+) and EDTA have little effect on enzyme activity at 1-10 mM. Zn(2+) at 3, 5, 7 or 10 mM inhibits activity by 20%, 30%, 40% and 65%, respectively. Functionally, hydrolyzes o-nitrophenyl-beta-D-galactopyranoside (ONPG) and p-nitrophenyl-beta-D-fucopyranoside (PNPF), but not p-nitrophenyl-beta-D-glucopyranoside (PNPG), p-nitrophenyl-beta-D-xylopyranoside (PNPX) or p-nitrophenyl-beta-D-arabinopyranoside (PNPA). Also hydrolyzes lactose, including lactose in milk. In Alicyclobacillus acidocaldarius subsp. acidocaldarius (strain ATCC 27009 / DSM 446 / BCRC 14685 / JCM 5260 / KCTC 1825 / NBRC 15652 / NCIMB 11725 / NRRL B-14509 / 104-IA) (Bacillus acidocaldarius), this protein is Beta-galactosidase BglY (bglY).